The primary structure comprises 110 residues: Insulin (110 aa).

Residues 1–24 (MALWMRLLPLLALLALWAPAPTRA) form the signal peptide. 3 disulfide bridges follow: cysteine 31/cysteine 96, cysteine 43/cysteine 109, and cysteine 95/cysteine 100. The propeptide at 57 to 87 (EVEDLQVRDVELAGAPGEGGLQPLALEGALQ) is c peptide.

It belongs to the insulin family. As to quaternary structure, heterodimer of a B chain and an A chain linked by two disulfide bonds.

It localises to the secreted. Functionally, insulin decreases blood glucose concentration. It increases cell permeability to monosaccharides, amino acids and fatty acids. It accelerates glycolysis, the pentose phosphate cycle, and glycogen synthesis in liver. The polypeptide is Insulin (INS) (Canis lupus familiaris (Dog)).